The following is a 468-amino-acid chain: 3-isopropylmalate dehydratase large subunit 2 (468 aa).

Residues Cys349, Cys409, and Cys412 each contribute to the [4Fe-4S] cluster site.

It belongs to the aconitase/IPM isomerase family. LeuC type 1 subfamily. Heterodimer of LeuC and LeuD. The cofactor is [4Fe-4S] cluster.

It catalyses the reaction (2R,3S)-3-isopropylmalate = (2S)-2-isopropylmalate. The protein operates within amino-acid biosynthesis; L-leucine biosynthesis; L-leucine from 3-methyl-2-oxobutanoate: step 2/4. Its function is as follows. Catalyzes the isomerization between 2-isopropylmalate and 3-isopropylmalate, via the formation of 2-isopropylmaleate. The sequence is that of 3-isopropylmalate dehydratase large subunit 2 from Bradyrhizobium diazoefficiens (strain JCM 10833 / BCRC 13528 / IAM 13628 / NBRC 14792 / USDA 110).